The following is a 616-amino-acid chain: Heme A synthase-mitochondrial ferredoxin fusion protein (616 aa).

The transit peptide at 1 to 45 (MNISRSSGLMRQFLLQPLRKGCDISCLGRSSWRMSRSFSGSSVLN) directs the protein to the mitochondrion. The tract at residues 45 to 465 (NEINLSRTKN…AALSLAQRLH (421 aa)) is heme a synthase cox15-like. Topologically, residues 46 to 97 (EINLSRTKNLFLNDCKFNKNSFEKFFARRLSNSVAPTPGGILQETEKIPSKK) are mitochondrial matrix. Residues 98–118 (VAFWLLGSSALVLAIVVVGGI) traverse the membrane as a helical segment. The Mitochondrial intermembrane portion of the chain corresponds to 119–182 (TRLTESGLSI…NIFFWEWFHR (64 aa)). Histidine 181 lines the heme o pocket. The helical transmembrane segment at 183–203 (VLGRGIGLTILLPSIYMIVTK) threads the bilayer. At 204 to 212 (RASPWLSKR) the chain is on the mitochondrial matrix side. Residues 213–233 (LIGLTGLVGLQGVIGWWMVKS) form a helical membrane-spanning segment. Residues 234-254 (GLSEELFSDGSHPRVSHYRLA) lie on the Mitochondrial intermembrane side of the membrane. A helical membrane pass occupies residues 255-275 (THLAAAVALYIGLVWTGHGIL). Residue histidine 256 coordinates heme o. Residues 276 to 311 (QRHAFLKSMKSGSTSQLTSMVSSVQKMKGFRTSVNS) are Mitochondrial matrix-facing. Residues 312–332 (FVGLVLITLLSGAFVAGLDAG) form a helical membrane-spanning segment. Topologically, residues 333-380 (MIYCTFPEMGEGRLAPSKSELFDQRFCRKDDKSDLIWRNMIDNPSLVQ) are mitochondrial intermembrane. The chain crosses the membrane as a helical span at residues 381–401 (LEHRILAITTFVAACGLFIFS). Histidine 383 contributes to the heme b binding site. Topologically, residues 402–417 (RAKRNILPKKIKTSIN) are mitochondrial matrix. The helical transmembrane segment at 418-438 (VVTGVVTAQATLGIMTLIYVV) threads the bilayer. Position 439 (proline 439) is a topological domain, mitochondrial intermembrane. The chain crosses the membrane as a helical span at residues 440 to 460 (VPLAALHQAGSLVTLTAALSL). Heme b is bound at residue histidine 446. The Mitochondrial matrix segment spans residues 461 to 616 (AQRLHPEYAL…RNIRLERPKA (156 aa)). The region spanning 502–606 (FRPSFHSEIK…GIRVRIPAQT (105 aa)) is the 2Fe-2S ferredoxin-type domain. The tract at residues 516-616 (GTGIKVFFVT…RNIRLERPKA (101 aa)) is mitochondrial ferredoxin yah1-like. Cysteine 541, cysteine 547, cysteine 550, and cysteine 587 together coordinate [2Fe-2S] cluster.

The protein in the N-terminal section; belongs to the COX15/CtaA family. Type 2 subfamily. This sequence in the C-terminal section; belongs to the adrenodoxin/putidaredoxin family. In terms of assembly, homodimer. Heme b is required as a cofactor. The cofactor is [2Fe-2S] cluster. Post-translationally, the etp1 preprotein is cleaved into 2 chains after imort into mitochondria. The N-terminal chain containing a heme A synthase cox15-like domain etp1(cd) is a subunit of the membrane-embedded cytochrome c oxidase complex and functions in the respiratory chain. The C-terminal chain containing a ferredoxin yah1-like domain etp1(fd) is released and serves in the matrix as electron transfer protein.

It localises to the mitochondrion inner membrane. The protein localises to the mitochondrion matrix. It carries out the reaction Fe(II)-heme o + 2 A + H2O = Fe(II)-heme a + 2 AH2. It functions in the pathway porphyrin-containing compound metabolism; heme A biosynthesis; heme A from heme O: step 1/1. Its function is as follows. Catalyzes the second reaction in the biosynthesis of heme A, a prosthetic group of mitochondrial cytochrome c oxidase (CcO). Heme A is synthesized from heme B by two sequential enzymatic reactions catalyzed by heme O synthase (HOS) and heme A synthase (HAS). HAS catalyzes the conversion of heme O to heme A by two successive hydroxylations of the methyl group at C8, in a reaction that involves matrix ferredoxin and ferredoxin reductase. The first hydroxylation forms heme I, the second hydroxylation results in an unstable dihydroxymethyl group, which spontaneously dehydrates, resulting in the formyl group of heme A. In terms of biological role, iron-sulfur protein that transfers electrons in a wide variety of metabolic reactions. Involved in heme A biosynthesis and in iron-sulfur cluster assembly. Transfers electrons from adrenodoxin reductase arh1 to heme A synthase etp1(cd), a heme protein that catalyzes the conversion of heme O to heme A. Required for the de novo synthesis of Fe-S clusters on iron sulfur cluster assembly protein isu1. Interact in its reduced state with isu1 to productively deliver electrons for Fe-S cluster synthesis. Essential for coenzyme Q biosynthesis. May transfer the electrons required for the hydroxylation reaction performed by coq6. This is Heme A synthase-mitochondrial ferredoxin fusion protein from Schizosaccharomyces pombe (strain 972 / ATCC 24843) (Fission yeast).